A 337-amino-acid chain; its full sequence is Anthranilate phosphoribosyltransferase (337 aa).

Residues G82, 85–86, T90, 92–95, 110–118, and S122 each bind 5-phospho-alpha-D-ribose 1-diphosphate; these read GD, NIST, and KHGGRSVSS. Anthranilate is bound at residue G82. S94 provides a ligand contact to Mg(2+). Position 168 (R168) interacts with anthranilate. Residues D226 and E227 each contribute to the Mg(2+) site.

The protein belongs to the anthranilate phosphoribosyltransferase family. In terms of assembly, homodimer. Requires Mg(2+) as cofactor.

It catalyses the reaction N-(5-phospho-beta-D-ribosyl)anthranilate + diphosphate = 5-phospho-alpha-D-ribose 1-diphosphate + anthranilate. It participates in amino-acid biosynthesis; L-tryptophan biosynthesis; L-tryptophan from chorismate: step 2/5. Catalyzes the transfer of the phosphoribosyl group of 5-phosphorylribose-1-pyrophosphate (PRPP) to anthranilate to yield N-(5'-phosphoribosyl)-anthranilate (PRA). The chain is Anthranilate phosphoribosyltransferase from Francisella tularensis subsp. novicida (strain U112).